Reading from the N-terminus, the 394-residue chain is Putative pectate lyase 17 (394 aa).

Positions 1 to 22 (MTHFTVSCLLVALFLCQSLVHA) are cleaved as a signal peptide. The Ca(2+) site is built by D192, D216, and D220. The active site involves R272.

The protein belongs to the polysaccharide lyase 1 family. The cofactor is Ca(2+).

The enzyme catalyses Eliminative cleavage of (1-&gt;4)-alpha-D-galacturonan to give oligosaccharides with 4-deoxy-alpha-D-galact-4-enuronosyl groups at their non-reducing ends.. It functions in the pathway glycan metabolism; pectin degradation; 2-dehydro-3-deoxy-D-gluconate from pectin: step 2/5. The protein is Putative pectate lyase 17 of Arabidopsis thaliana (Mouse-ear cress).